Consider the following 451-residue polypeptide: Tubulin alpha-1 chain (451 aa).

Glutamine 11 is a GTP binding site. Lysine 40 carries the post-translational modification N6-acetyllysine. 6 residues coordinate GTP: glutamate 71, glycine 144, threonine 145, threonine 179, asparagine 206, and asparagine 228. Position 71 (glutamate 71) interacts with Mg(2+). Glutamate 254 is a catalytic residue.

It belongs to the tubulin family. In terms of assembly, dimer of alpha and beta chains. A typical microtubule is a hollow water-filled tube with an outer diameter of 25 nm and an inner diameter of 15 nM. Alpha-beta heterodimers associate head-to-tail to form protofilaments running lengthwise along the microtubule wall with the beta-tubulin subunit facing the microtubule plus end conferring a structural polarity. Microtubules usually have 13 protofilaments but different protofilament numbers can be found in some organisms and specialized cells. It depends on Mg(2+) as a cofactor. In terms of processing, undergoes a tyrosination/detyrosination cycle, the cyclic removal and re-addition of a C-terminal tyrosine residue by the enzymes tubulin tyrosine carboxypeptidase (TTCP) and tubulin tyrosine ligase (TTL), respectively. Acetylation of alpha chains at Lys-40 stabilizes microtubules and affects affinity and processivity of microtubule motors. This modification has a role in multiple cellular functions, ranging from cell motility, cell cycle progression or cell differentiation to intracellular trafficking and signaling.

The protein resides in the cytoplasm. The protein localises to the cytoskeleton. It catalyses the reaction GTP + H2O = GDP + phosphate + H(+). Tubulin is the major constituent of microtubules, a cylinder consisting of laterally associated linear protofilaments composed of alpha- and beta-tubulin heterodimers. Microtubules grow by the addition of GTP-tubulin dimers to the microtubule end, where a stabilizing cap forms. Below the cap, tubulin dimers are in GDP-bound state, owing to GTPase activity of alpha-tubulin. The polypeptide is Tubulin alpha-1 chain (TUBA1) (Chlamydomonas reinhardtii (Chlamydomonas smithii)).